Consider the following 171-residue polypeptide: Neuronal vesicle trafficking-associated protein 2 (171 aa).

Positions 1-21 (MVKLNSNPGEKGAKPPSVEDG) are disordered. Over 1-71 (MVKLNSNPGE…FRVPKIAEFT (71 aa)) the chain is Cytoplasmic. A helical; Signal-anchor for type II membrane protein transmembrane segment spans residues 72 to 92 (VTILVSLALAFLACIVFLVVY). The Lumenal segment spans residues 93–171 (KAFTYDHSCP…EPKPPKTQGH (79 aa)).

The protein belongs to the NSG family. In terms of tissue distribution, specifically expressed in neural and neuroendocrine tissues. Pituitary and less in adrenal gland and testis. Expressed in the hippocampus throughout development. Remains enriched in layer V cortical neurons during development. At P0, broadly expressed in the neocortex. Is down-regulated overall at P8 and P14, but remains relatively enriched in layer V. At P0 is lower expressed in the cerebellum. Expression remains low throughout development, and is undetectable by adulthood.

The protein localises to the membrane. It is found in the golgi apparatus. The protein resides in the trans-Golgi network membrane. Its subcellular location is the cell projection. It localises to the dendrite. The protein localises to the endosome membrane. It is found in the early endosome membrane. The protein resides in the late endosome membrane. Its subcellular location is the lysosome lumen. It localises to the cytoplasmic vesicle membrane. The protein localises to the golgi stack membrane. It is found in the endosome. The protein resides in the multivesicular body membrane. In Mus musculus (Mouse), this protein is Neuronal vesicle trafficking-associated protein 2.